Here is an 85-residue protein sequence, read N- to C-terminus: V-type proton ATPase subunit f (85 aa).

Topologically, residues 1–10 (MRPVVSTGKA) are lumenal. The chain crosses the membrane as a helical span at residues 11-31 (WCCTVLSAFGVVILSVIAHLF). The Cytoplasmic portion of the chain corresponds to 32-54 (NTNHESFVGSINDPEDGPAVAHT). The helical transmembrane segment at 55–75 (VYLAALVYLVFFVFCGFQVYL) threads the bilayer. Over 76 to 85 (ARRKPSIELR) the chain is Lumenal.

As to quaternary structure, V-ATPase is a heteromultimeric enzyme composed of a peripheral catalytic V1 complex (components A to H) attached to an integral membrane V0 proton pore complex (components: a, c, c', c'', d, e, f and VOA1).

It is found in the endoplasmic reticulum membrane. The protein localises to the vacuole membrane. Accessory component of the V0 complex of vacuolar(H+)-ATPase (V-ATPase), a multisubunit enzyme composed of a peripheral complex (V1) that hydrolyzes ATP and a membrane integral complex (V0) that translocates protons. V-ATPase is responsible for acidifying and maintaining the pH of intracellular compartments. The chain is V-type proton ATPase subunit f from Saccharomyces cerevisiae (strain ATCC 204508 / S288c) (Baker's yeast).